We begin with the raw amino-acid sequence, 658 residues long: Threonine--tRNA ligase (658 aa).

The TGS domain maps to 1–63 (MDQITITFPD…DDNASIDFVA (63 aa)). Positions 245–548 (DHRKLGRELD…LIEHYAGNFP (304 aa)) are catalytic. Zn(2+) contacts are provided by C341, H392, and H525.

It belongs to the class-II aminoacyl-tRNA synthetase family. Homodimer. The cofactor is Zn(2+).

The protein localises to the cytoplasm. The catalysed reaction is tRNA(Thr) + L-threonine + ATP = L-threonyl-tRNA(Thr) + AMP + diphosphate + H(+). Its function is as follows. Catalyzes the attachment of threonine to tRNA(Thr) in a two-step reaction: L-threonine is first activated by ATP to form Thr-AMP and then transferred to the acceptor end of tRNA(Thr). Also edits incorrectly charged L-seryl-tRNA(Thr). This is Threonine--tRNA ligase from Rhodopseudomonas palustris (strain ATCC BAA-98 / CGA009).